The primary structure comprises 328 residues: MNASENYFTMDPTENISQVLDQNRNNTNSLRTHPTVEEYYENMTAFLSLAIFIASLLTILNISIFATTVSRLRRHLDKPLLGPSIMMVGLYPIISVAALVTILVPYSWFICHTVMHVMFMVGGPVFRTLLFRYVGSEQNYVKETAGEAVQLNTPPCCCCCLCLPMVIPTKAKLCISRYMVWQMPFWQGSIMLVMNILYYRDIQLYRQVMFFFIPFIVCSIVLGAWSLQITVRMITKVRGDYQLRKKMFCLQLVVMLCKLQYLVLYDQLDGIKMGGEYPINHTVYKQTIINILILVEMVLVSMMVQSAYRTPVQVQIDEVNKEKEVTRI.

Over 1–44 (MNASENYFTMDPTENISQVLDQNRNNTNSLRTHPTVEEYYENMT) the chain is Extracellular. N-linked (GlcNAc...) asparagine glycosylation is found at asparagine 2, asparagine 15, asparagine 25, and asparagine 42. A helical transmembrane segment spans residues 45-65 (AFLSLAIFIASLLTILNISIF). The Cytoplasmic portion of the chain corresponds to 66 to 84 (ATTVSRLRRHLDKPLLGPS). Residues 85-105 (IMMVGLYPIISVAALVTILVP) form a helical membrane-spanning segment. Tyrosine 106 is a topological domain (extracellular). A helical membrane pass occupies residues 107–127 (SWFICHTVMHVMFMVGGPVFR). The Cytoplasmic segment spans residues 128–177 (TLLFRYVGSEQNYVKETAGEAVQLNTPPCCCCCLCLPMVIPTKAKLCISR). The helical transmembrane segment at 178–198 (YMVWQMPFWQGSIMLVMNILY) threads the bilayer. Topologically, residues 199 to 208 (YRDIQLYRQV) are extracellular. Residues 209–229 (MFFFIPFIVCSIVLGAWSLQI) form a helical membrane-spanning segment. The Cytoplasmic portion of the chain corresponds to 230–247 (TVRMITKVRGDYQLRKKM). The helical transmembrane segment at 248–265 (FCLQLVVMLCKLQYLVLY) threads the bilayer. Over 266–287 (DQLDGIKMGGEYPINHTVYKQT) the chain is Extracellular. N-linked (GlcNAc...) asparagine glycosylation is present at asparagine 280. Residues 288-308 (IINILILVEMVLVSMMVQSAY) traverse the membrane as a helical segment. At 309–328 (RTPVQVQIDEVNKEKEVTRI) the chain is on the cytoplasmic side.

The protein belongs to the OST-alpha family.

Its subcellular location is the cell membrane. Its function is as follows. Probable transporter. The sequence is that of Organic solute transporter alpha-like protein from Drosophila melanogaster (Fruit fly).